Consider the following 250-residue polypeptide: Bacteriorhodopsin (250 aa).

Topologically, residues 1 to 18 (MCCAALAPPMAATVGPES) are extracellular. Residues 19–37 (IWLWIGTIGMTLGTLYFVG) traverse the membrane as a helical segment. Residues 38-51 (RGRGVRDRKMQEFY) lie on the Cytoplasmic side of the membrane. The chain crosses the membrane as a helical span at residues 52-70 (IITIFITTIAAAMYFAMAT). Residues 71–86 (GFGVTEVMVGDEALTI) are Extracellular-facing. A helical membrane pass occupies residues 87–104 (YWARYADWLFTTPLLLLD). Residues 105 to 115 (LSLLAGANRNT) lie on the Cytoplasmic side of the membrane. The helical transmembrane segment at 116–135 (IATLIGLDVFMIGTGAIAAL) threads the bilayer. At 136 to 142 (SSTPGTR) the chain is on the extracellular side. Residues 143 to 162 (IAWWAISTGALLALLYVLVG) form a helical membrane-spanning segment. Topologically, residues 163–180 (TLSENARNRAPEVASLFG) are cytoplasmic. Residues 181–199 (RLRNLVIALWFLYPVVWIL) form a helical membrane-spanning segment. Residues 200-212 (GTEGTFGILPLYW) are Extracellular-facing. The chain crosses the membrane as a helical span at residues 213–232 (ETAAFMVLDLSAKVGFGVIL). Lys-225 carries the N6-(retinylidene)lysine modification. Residues 233 to 250 (LQSRSVLERVATPTAAPT) lie on the Cytoplasmic side of the membrane.

Belongs to the archaeal/bacterial/fungal opsin family.

It localises to the cell membrane. In terms of biological role, light-driven proton pump. This chain is Bacteriorhodopsin (bop), found in Haloterrigena sp. (strain arg-4).